Consider the following 160-residue polypeptide: MNPRRKKRLGVVLAILFGLSATIGLIIYALNQNMDLFYTPTELVYGKEGKKPEIGQRLRIGGMVVEGSVKRDPNSLKVSFDLHDVGPSITVTYDGILPDLFREGQGIVAQGVLVEPTKIEAFEVLAKHDENYMPPEIAEAMKKTHAPLQYSQEQKQGSDQ.

Residues 1-8 (MNPRRKKR) are Cytoplasmic-facing. Residues 9–29 (LGVVLAILFGLSATIGLIIYA) form a helical; Signal-anchor for type II membrane protein membrane-spanning segment. Topologically, residues 30–160 (LNQNMDLFYT…SQEQKQGSDQ (131 aa)) are periplasmic. Residues His128 and Tyr132 each contribute to the heme site.

This sequence belongs to the CcmE/CycJ family.

It is found in the cell inner membrane. In terms of biological role, heme chaperone required for the biogenesis of c-type cytochromes. Transiently binds heme delivered by CcmC and transfers the heme to apo-cytochromes in a process facilitated by CcmF and CcmH. The sequence is that of Cytochrome c-type biogenesis protein CcmE from Vibrio cholerae serotype O1 (strain ATCC 39541 / Classical Ogawa 395 / O395).